The chain runs to 1793 residues: Protein TIC 214 (1793 aa).

The next 6 helical transmembrane spans lie at Leu11–Phe31, Phe64–Leu84, Ile90–Asn112, Ile129–Leu149, Val172–Ile192, and Ile222–Tyr242. A disordered region spans residues Asp1504–Lys1524.

The protein belongs to the TIC214 family. Part of the Tic complex.

It is found in the plastid. The protein resides in the chloroplast inner membrane. In terms of biological role, involved in protein precursor import into chloroplasts. May be part of an intermediate translocation complex acting as a protein-conducting channel at the inner envelope. The protein is Protein TIC 214 of Lotus japonicus (Lotus corniculatus var. japonicus).